Consider the following 73-residue polypeptide: Protein F9 homolog (73 aa).

The Virion surface segment spans residues 1 to 34 (GHAAANCALARVATALTRRVPASRHGLAEGGTPP). Residues 35–55 (WTLLLAVAAVTVLGVVAVSLL) form a helical membrane-spanning segment. Topologically, residues 56–73 (RRALRVRYRFARPAALRA) are intravirion.

It belongs to the chordopoxvirinae L1 protein family.

Its subcellular location is the virion membrane. The sequence is that of Protein F9 homolog from Capra hircus (Goat).